Reading from the N-terminus, the 168-residue chain is Peptidyl-Lys metalloendopeptidase (168 aa).

Disulfide bonds link C6–C76 and C78–C98. H118 serves as a coordination point for Zn(2+). E119 is a catalytic residue. Zn(2+) contacts are provided by H122 and D131.

It depends on Zn(2+) as a cofactor.

It localises to the secreted. It catalyses the reaction Preferential cleavage in proteins: -Xaa-|-Lys- (in which Xaa may be Pro).. Inhibited by chelating agents such as EDTA and 1,10-phenanthroline. The polypeptide is Peptidyl-Lys metalloendopeptidase (MEP) (Pleurotus ostreatus (Oyster mushroom)).